The chain runs to 355 residues: tRNA-specific 2-thiouridylase MnmA (355 aa).

Residues 8–15 and Met-34 contribute to the ATP site; that span reads GMSGGVDS. Cys-103 acts as the Nucleophile in catalysis. Cys-103 and Cys-199 are joined by a disulfide. Gly-127 contributes to the ATP binding site. An interaction with tRNA region spans residues 149–151; sequence KDQ. Catalysis depends on Cys-199, which acts as the Cysteine persulfide intermediate. An interaction with tRNA region spans residues 305–306; the sequence is RY.

This sequence belongs to the MnmA/TRMU family.

The protein resides in the cytoplasm. The enzyme catalyses S-sulfanyl-L-cysteinyl-[protein] + uridine(34) in tRNA + AH2 + ATP = 2-thiouridine(34) in tRNA + L-cysteinyl-[protein] + A + AMP + diphosphate + H(+). Its function is as follows. Catalyzes the 2-thiolation of uridine at the wobble position (U34) of tRNA, leading to the formation of s(2)U34. This chain is tRNA-specific 2-thiouridylase MnmA, found in Clostridium acetobutylicum (strain ATCC 824 / DSM 792 / JCM 1419 / IAM 19013 / LMG 5710 / NBRC 13948 / NRRL B-527 / VKM B-1787 / 2291 / W).